A 429-amino-acid chain; its full sequence is Histidinol dehydrogenase (429 aa).

NAD(+)-binding residues include Y130, Q191, and N214. 3 residues coordinate substrate: S237, Q259, and H262. Positions 259 and 262 each coordinate Zn(2+). Active-site proton acceptor residues include E327 and H328. Residues H328, D361, E415, and H420 each coordinate substrate. Residue D361 participates in Zn(2+) binding. H420 contributes to the Zn(2+) binding site.

Belongs to the histidinol dehydrogenase family. Requires Zn(2+) as cofactor.

The catalysed reaction is L-histidinol + 2 NAD(+) + H2O = L-histidine + 2 NADH + 3 H(+). Its pathway is amino-acid biosynthesis; L-histidine biosynthesis; L-histidine from 5-phospho-alpha-D-ribose 1-diphosphate: step 9/9. Functionally, catalyzes the sequential NAD-dependent oxidations of L-histidinol to L-histidinaldehyde and then to L-histidine. The polypeptide is Histidinol dehydrogenase (Neisseria meningitidis serogroup B (strain ATCC BAA-335 / MC58)).